We begin with the raw amino-acid sequence, 327 residues long: GrpE protein homolog 2, mitochondrial (327 aa).

Residues Met1–His39 constitute a mitochondrion transit peptide. A disordered region spans residues Ser68–Ser140. Composition is skewed to basic and acidic residues over residues Ser75–Thr93 and Ser103–Ala113. The segment covering Ser130–Ser140 has biased composition (acidic residues).

The protein belongs to the GrpE family. As to quaternary structure, probable component of the PAM complex, at least composed of SSC1 (mtHsp70), MGE1, TIM44, PAM16/TIM16, PAM17 and PAM18/TIM14. Interacts with SSQ1.

The protein resides in the mitochondrion matrix. Functionally, essential component of the PAM complex, a complex required for the translocation of transit peptide-containing proteins from the inner membrane into the mitochondrial matrix in an ATP-dependent manner. Seems to control the nucleotide-dependent binding of mitochondrial HSP70 to substrate proteins. Binds ATP. Interacts with copper ions Cu(2+). Confers thermotolerance to long-term exposure at moderately high temperature (TMHT at 35 degrees Celsius). The chain is GrpE protein homolog 2, mitochondrial from Arabidopsis thaliana (Mouse-ear cress).